The following is a 197-amino-acid chain: Alkyl hydroperoxide reductase C (197 aa).

Residues 2–163 (VLVTQNAPNF…MIRMVDALDF (162 aa)) form the Thioredoxin domain. Cys-50 (cysteine sulfenic acid (-SOH) intermediate) is an active-site residue.

It belongs to the peroxiredoxin family. AhpC/Prx1 subfamily. Homodimer; disulfide-linked, upon oxidation. 5 homodimers assemble to form a ring-like decamer.

It is found in the cytoplasm. It carries out the reaction a hydroperoxide + NADH + H(+) = an alcohol + NAD(+) + H2O. Functionally, thiol-specific peroxidase that catalyzes the reduction of hydrogen peroxide and organic hydroperoxides to water and alcohols, respectively. Plays a role in cell protection against oxidative stress by detoxifying peroxides. This Buchnera aphidicola subsp. Acyrthosiphon pisum (strain APS) (Acyrthosiphon pisum symbiotic bacterium) protein is Alkyl hydroperoxide reductase C.